We begin with the raw amino-acid sequence, 317 residues long: Ribosomal protein L11 methyltransferase (317 aa).

Positions 158, 179, 201, and 244 each coordinate S-adenosyl-L-methionine.

It belongs to the methyltransferase superfamily. PrmA family.

Its subcellular location is the cytoplasm. It carries out the reaction L-lysyl-[protein] + 3 S-adenosyl-L-methionine = N(6),N(6),N(6)-trimethyl-L-lysyl-[protein] + 3 S-adenosyl-L-homocysteine + 3 H(+). Its function is as follows. Methylates ribosomal protein L11. This chain is Ribosomal protein L11 methyltransferase, found in Streptococcus agalactiae serotype III (strain NEM316).